The chain runs to 142 residues: Large ribosomal subunit protein uL11 (142 aa).

It belongs to the universal ribosomal protein uL11 family. As to quaternary structure, part of the ribosomal stalk of the 50S ribosomal subunit. Interacts with L10 and the large rRNA to form the base of the stalk. L10 forms an elongated spine to which L12 dimers bind in a sequential fashion forming a multimeric L10(L12)X complex. Post-translationally, one or more lysine residues are methylated.

Functionally, forms part of the ribosomal stalk which helps the ribosome interact with GTP-bound translation factors. The chain is Large ribosomal subunit protein uL11 from Methylocella silvestris (strain DSM 15510 / CIP 108128 / LMG 27833 / NCIMB 13906 / BL2).